A 760-amino-acid chain; its full sequence is UDP-N-acetylmuramoyl-L-alanyl-D-glutamate--2,6-diaminopimelate ligase MurE homolog, chloroplastic (760 aa).

The transit peptide at 1–59 directs the protein to the chloroplast; the sequence is MATAPLAFRLPFPFSFPSASRPPPSRILAPPTPRRLPLRLAAAAARRFRPPTADDEPPE. 2 disordered regions span residues 13-159 and 176-205; these read PFSF…TDEL and LSVVSVADEEDEEVEGGEDEDDGLPLDEDG. Residues 20 to 34 show a composition bias toward pro residues; the sequence is SRPPPSRILAPPTPR. A compositionally biased stretch (acidic residues) spans 53–62; that stretch reads ADDEPPEAAE. Residues 118–132 are compositionally biased toward basic and acidic residues; sequence EIDRAIAEKREEFTR. 2 stretches are compositionally biased toward acidic residues: residues 150–159 and 182–205; these read PEDEDLTDEL and ADEEDEEVEGGEDEDDGLPLDEDG.

This sequence belongs to the MurCDEF family. MurE subfamily. Component of the plastid-encoded plastid RNA polymerase (PEP) complex.

The protein resides in the plastid. The protein localises to the chloroplast. Its function is as follows. Required for the activity of the plastid-encoded RNA polymerase (PEP) and full expression of genes transcribed by PEP. Required for the proper build-up and formation of the PEP-complex. This chain is UDP-N-acetylmuramoyl-L-alanyl-D-glutamate--2,6-diaminopimelate ligase MurE homolog, chloroplastic, found in Zea mays (Maize).